Reading from the N-terminus, the 232-residue chain is Caffeoyl-CoA O-methyltransferase (232 aa).

K6 is a binding site for substrate. S-adenosyl-L-methionine contacts are provided by residues T48, E70, 72-73 (GV), S78, D96, and A125. Substrate is bound at residue D148. An a divalent metal cation-binding site is contributed by D148. D150 is an S-adenosyl-L-methionine binding site. 2 residues coordinate a divalent metal cation: D174 and N175. N179 provides a ligand contact to substrate.

It belongs to the class I-like SAM-binding methyltransferase superfamily. Cation-dependent O-methyltransferase family. CCoAMT subfamily. Requires a divalent metal cation as cofactor.

The enzyme catalyses (E)-caffeoyl-CoA + S-adenosyl-L-methionine = (E)-feruloyl-CoA + S-adenosyl-L-homocysteine + H(+). It participates in aromatic compound metabolism; phenylpropanoid biosynthesis. Functionally, methylates caffeoyl-CoA to feruloyl-CoA and 5-hydroxyferuloyl-CoA to sinapoyl-CoA. Plays a role in the synthesis of feruloylated polysaccharides. Involved in the reinforcement of the plant cell wall. Also involved in the responding to wounding or pathogen challenge by the increased formation of cell wall-bound ferulic acid polymers. The sequence is that of Caffeoyl-CoA O-methyltransferase from Citrus natsudaidai (Natsudaidai orange).